The chain runs to 359 residues: Leafy/floricaula homolog FL1 (359 aa).

Positions 113-170 (SEEQVVQHSEKDQLGRAGSGDTAGTSWGAQQQRKKHRHRHHITAMKGAATEEDEEDEE) are disordered. A compositionally biased stretch (basic residues) spans 144–155 (QRKKHRHRHHIT). 3 consecutive DNA-binding regions follow at residues 179 to 183 (REHPF), 248 to 255 (NKPKMRHY), and 320 to 323 (YVPT). The span at 340–352 (ASSASTSTSAPTA) shows a compositional bias: low complexity. The tract at residues 340–359 (ASSASTSTSAPTAHHLELPY) is disordered.

It belongs to the FLO/LFY family. As to expression, expressed strongly in the early floral primordium and then successively in the primordia of sepals, petals, stamens and carpels. Also in the leaf primordia and young leaves.

The protein localises to the nucleus. Its function is as follows. Probable transcription factor. This Eucalyptus globulus (Tasmanian blue gum) protein is Leafy/floricaula homolog FL1 (LF1).